A 293-amino-acid polypeptide reads, in one-letter code: Ribosomal RNA small subunit methyltransferase A (293 aa).

N29, L31, G56, E77, D102, and N127 together coordinate S-adenosyl-L-methionine.

This sequence belongs to the class I-like SAM-binding methyltransferase superfamily. rRNA adenine N(6)-methyltransferase family. RsmA subfamily.

It is found in the cytoplasm. It carries out the reaction adenosine(1518)/adenosine(1519) in 16S rRNA + 4 S-adenosyl-L-methionine = N(6)-dimethyladenosine(1518)/N(6)-dimethyladenosine(1519) in 16S rRNA + 4 S-adenosyl-L-homocysteine + 4 H(+). In terms of biological role, specifically dimethylates two adjacent adenosines (A1518 and A1519) in the loop of a conserved hairpin near the 3'-end of 16S rRNA in the 30S particle. May play a critical role in biogenesis of 30S subunits. This chain is Ribosomal RNA small subunit methyltransferase A, found in Geobacillus kaustophilus (strain HTA426).